Reading from the N-terminus, the 164-residue chain is Transcription factor MafF (164 aa).

A basic motif region spans residues 51 to 76; that stretch reads RLKQRRRTLKNRGYAASCRVKRVCQK. One can recognise a bZIP domain in the interval 51–114; the sequence is RLKQRRRTLK…DALRGKCEAL (64 aa). Residues 79–93 form a leucine-zipper region; it reads LQKQKSELEREVDKL. Residues 141–164 form a disordered region; sequence KSTPGSGSGPAHGPDPAHGPASCS. The span at 149-164 shows a compositional bias: low complexity; it reads GPAHGPDPAHGPASCS.

It belongs to the bZIP family. Maf subfamily. In terms of assembly, monomer and homo- or heterodimer. Interacts with MIP. Forms high affinity heterodimers with members of the CNC-bZIP family such as NFE2L1/NRF1. As to expression, expressed in the term myometrium and kidney.

The protein localises to the nucleus. Its function is as follows. Since they lack a putative transactivation domain, the small Mafs behave as transcriptional repressors when they dimerize among themselves. However, they seem to serve as transcriptional activators by dimerizing with other (usually larger) basic-zipper proteins, such as NFE2L1/NRF1, and recruiting them to specific DNA-binding sites. Interacts with the upstream promoter region of the oxytocin receptor gene. May be a transcriptional enhancer in the up-regulation of the oxytocin receptor gene at parturition. This chain is Transcription factor MafF (MAFF), found in Homo sapiens (Human).